Consider the following 182-residue polypeptide: ATP-dependent protease subunit HslV (182 aa).

The active site involves T10. Residues A166, C169, and S172 each contribute to the Na(+) site.

It belongs to the peptidase T1B family. HslV subfamily. As to quaternary structure, a double ring-shaped homohexamer of HslV is capped on each side by a ring-shaped HslU homohexamer. The assembly of the HslU/HslV complex is dependent on binding of ATP.

It is found in the cytoplasm. It catalyses the reaction ATP-dependent cleavage of peptide bonds with broad specificity.. With respect to regulation, allosterically activated by HslU binding. Functionally, protease subunit of a proteasome-like degradation complex believed to be a general protein degrading machinery. The sequence is that of ATP-dependent protease subunit HslV from Rickettsia peacockii (strain Rustic).